The primary structure comprises 88 residues: Putative membrane protein insertion efficiency factor (88 aa).

Belongs to the UPF0161 family.

It localises to the cell membrane. Functionally, could be involved in insertion of integral membrane proteins into the membrane. The polypeptide is Putative membrane protein insertion efficiency factor (Exiguobacterium sibiricum (strain DSM 17290 / CCUG 55495 / CIP 109462 / JCM 13490 / 255-15)).